The primary structure comprises 302 residues: Nucleotide-binding protein Bcenmc03_2806 (302 aa).

Residue 8-15 coordinates ATP; that stretch reads GISGSGKS. Position 57–60 (57–60) interacts with GTP; that stretch reads DARS.

The protein belongs to the RapZ-like family.

Displays ATPase and GTPase activities. This chain is Nucleotide-binding protein Bcenmc03_2806, found in Burkholderia orbicola (strain MC0-3).